Here is a 260-residue protein sequence, read N- to C-terminus: Snake venom serine proteinase 12 (260 aa).

Positions 1–18 (MVLIRVLANLLILQLSYA) are cleaved as a signal peptide. The propeptide occupies 19–24 (QKSSEL). Residues 25 to 251 (VIGGDECNIN…HLDWIQSIIA (227 aa)) enclose the Peptidase S1 domain. Intrachain disulfides connect C31-C163, C50-C66, C98-C258, C142-C212, C174-C191, and C202-C227. Residue H65 is the Charge relay system of the active site. N103 is a glycosylation site (N-linked (GlcNAc...) asparagine). D110 (charge relay system) is an active-site residue. Residue S206 is the Charge relay system of the active site.

It belongs to the peptidase S1 family. Snake venom subfamily. Monomer. In terms of tissue distribution, expressed by the venom gland.

The protein resides in the secreted. Functionally, snake venom serine protease that may act in the hemostasis system of the prey. This is Snake venom serine proteinase 12 from Crotalus adamanteus (Eastern diamondback rattlesnake).